The chain runs to 927 residues: Translation initiation factor IF-2 (927 aa).

The interval 27-337 is disordered; it reads LGLPVKSHAS…GAPKPVTERK (311 aa). Residues 49-69 are compositionally biased toward polar residues; sequence SFSSSKTKAPTNSVQTNQGVK. Basic and acidic residues-rich tracts occupy residues 70 to 86 and 101 to 138; these read TESKTVETKQGLSDDKP and FKAEREARAKAEAEKRQHNGDHRKNNRHNDTRSDDRRH. Residues 146–159 show a composition bias toward low complexity; sequence GNRNDNRQGQQNNR. 3 stretches are compositionally biased toward basic and acidic residues: residues 160-171, 202-226, and 234-257; these read NKNDGRYADHKQ, YSRHSEQRFREEQEAKRQAAKEQEL, and AQEEAQKAKEKLASKPVAKVKEIV. A compositionally biased stretch (low complexity) spans 300-316; sequence NWNNQNQVRNQRNSNWN. The region spanning 428–597 is the tr-type G domain; sequence ERPPVVTIMG…LLVAEMEELK (170 aa). A G1 region spans residues 437–444; it reads GHVDHGKT. 437-444 contacts GTP; the sequence is GHVDHGKT. The interval 462-466 is G2; the sequence is GITQH. The interval 483 to 486 is G3; that stretch reads DTPG. Residues 483 to 487 and 537 to 540 each bind GTP; these read DTPGH and NKID. Positions 537–540 are G4; sequence NKID. Residues 573-575 form a G5 region; that stretch reads SAK.

This sequence belongs to the TRAFAC class translation factor GTPase superfamily. Classic translation factor GTPase family. IF-2 subfamily.

The protein resides in the cytoplasm. Functionally, one of the essential components for the initiation of protein synthesis. Protects formylmethionyl-tRNA from spontaneous hydrolysis and promotes its binding to the 30S ribosomal subunits. Also involved in the hydrolysis of GTP during the formation of the 70S ribosomal complex. This is Translation initiation factor IF-2 from Streptococcus agalactiae serotype V (strain ATCC BAA-611 / 2603 V/R).